We begin with the raw amino-acid sequence, 266 residues long: Small ribosomal subunit protein eS1 (266 aa).

The tract at residues 234 to 266 is disordered; that stretch reads EGGTGTATKATGDDTGAKVERADGYEPPIQETV. Positions 244-257 are enriched in basic and acidic residues; sequence TGDDTGAKVERADG.

The protein belongs to the eukaryotic ribosomal protein eS1 family. Component of the small ribosomal subunit. Mature ribosomes consist of a small (40S) and a large (60S) subunit. The 40S subunit contains about 33 different proteins and 1 molecule of RNA (18S). The 60S subunit contains about 49 different proteins and 3 molecules of RNA (28S, 5.8S and 5S). Part of the small subunit (SSU) processome, composed of more than 70 proteins and the RNA chaperone small nucleolar RNA (snoRNA) U3.

The protein resides in the cytoplasm. It localises to the nucleus. The protein localises to the nucleolus. In terms of biological role, component of the small ribosomal subunit. The ribosome is a large ribonucleoprotein complex responsible for the synthesis of proteins in the cell. Part of the small subunit (SSU) processome, first precursor of the small eukaryotic ribosomal subunit. During the assembly of the SSU processome in the nucleolus, many ribosome biogenesis factors, an RNA chaperone and ribosomal proteins associate with the nascent pre-rRNA and work in concert to generate RNA folding, modifications, rearrangements and cleavage as well as targeted degradation of pre-ribosomal RNA by the RNA exosome. May play a role during erythropoiesis. The polypeptide is Small ribosomal subunit protein eS1 (rps3a) (Solea senegalensis (Senegalese sole)).